A 220-amino-acid chain; its full sequence is Cytidylate kinase (220 aa).

Position 10 to 18 (10 to 18 (GPASSGKST)) interacts with ATP.

This sequence belongs to the cytidylate kinase family. Type 1 subfamily.

The protein resides in the cytoplasm. The catalysed reaction is CMP + ATP = CDP + ADP. It catalyses the reaction dCMP + ATP = dCDP + ADP. This is Cytidylate kinase from Lactococcus lactis subsp. cremoris (strain MG1363).